The following is a 284-amino-acid chain: D-tagatose-1,6-bisphosphate aldolase subunit GatY (284 aa).

D82 acts as the Proton donor in catalysis. Zn(2+) contacts are provided by H83 and H180. G181 contributes to the dihydroxyacetone phosphate binding site. Residue H208 coordinates Zn(2+). Dihydroxyacetone phosphate contacts are provided by residues 209 to 211 and 230 to 233; these read GAS and NVAT.

Belongs to the class II fructose-bisphosphate aldolase family. TagBP aldolase GatY subfamily. Forms a complex with GatZ. Requires Zn(2+) as cofactor.

The enzyme catalyses D-tagatofuranose 1,6-bisphosphate = D-glyceraldehyde 3-phosphate + dihydroxyacetone phosphate. Its pathway is carbohydrate metabolism; D-tagatose 6-phosphate degradation; D-glyceraldehyde 3-phosphate and glycerone phosphate from D-tagatose 6-phosphate: step 2/2. Catalytic subunit of the tagatose-1,6-bisphosphate aldolase GatYZ, which catalyzes the reversible aldol condensation of dihydroxyacetone phosphate (DHAP or glycerone-phosphate) with glyceraldehyde 3-phosphate (G3P) to produce tagatose 1,6-bisphosphate (TBP). Requires GatZ subunit for full activity and stability. Is involved in the catabolism of galactitol. The polypeptide is D-tagatose-1,6-bisphosphate aldolase subunit GatY (Escherichia coli O45:K1 (strain S88 / ExPEC)).